Here is a 110-residue protein sequence, read N- to C-terminus: Dermcidin (110 aa).

The signal sequence occupies residues 1 to 19; that stretch reads MRFMTLLFLTALAGALVCA. Residues 24 to 70 form a disordered region; it reads AASAPGSGNPCHEASAAQKENAGEDPGLARQAPKPRKQRSSLLEKGL. O-linked (Xyl...) (chondroitin sulfate) serine glycosylation is found at Ser30 and Ser38. Positions 50–62 are excised as a propeptide; the sequence is GLARQAPKPRKQR. Residues 64 to 108 traverse the membrane as a helical segment; that stretch reads SLLEKGLDGAKKAVGGLGKLGKDAVEDLESVGKGAVHDVKDVLDS. Glu67 contacts Zn(2+). Lys68 is modified (N6-acetyllysine). 5 residues coordinate Zn(2+): Asp71, Asp86, Asp90, His100, and Asp104. Residue Leu110 is a propeptide.

In terms of assembly, homohexamer. The cofactor is Mn(2+). Zn(2+) is required as a cofactor. Detected in urine (at protein level). Constitutively expressed in eccrine sweat gland cells (at protein level). Secreted into the sweat at a concentration of 1-10 micrograms/ml.

It localises to the secreted. The protein resides in the membrane. Its function is as follows. Found in sweat, has an antimicrobial activity during early bacterial colonization. The secreted peptide assembles into homohexameric complexes that can associate with and also insert into pathogen membranes. Once inserted in bacteria membranes forms anion channels probably altering the transmembrane potential essential for bacterial survival. Highly effective against E.coli, E.faecalis, S.aureus and C.albicans. Optimal pH and salt concentration resemble the conditions in sweat. Also exhibits proteolytic activity, cleaving on the C-terminal side of Arg and, to a lesser extent, Lys residues. Promotes survival of neurons and displays phosphatase activity. It may bind IgG. The sequence is that of Dermcidin from Homo sapiens (Human).